Here is a 43-residue protein sequence, read N- to C-terminus: S-layer protein 1 (43 aa).

It is found in the secreted. The protein resides in the cell wall. It localises to the S-layer. The S-layer is a paracrystalline mono-layered assembly of proteins which coat the surface of bacteria. This Bacillus thuringiensis subsp. konkukian protein is S-layer protein 1.